Here is a 183-residue protein sequence, read N- to C-terminus: Protein Dr1 (183 aa).

The 64-residue stretch at 19-82 (TLPRASINKI…INAEHVLEAL (64 aa)) folds into the Histone-fold domain. The segment at 92 to 183 (QEAEAVLHDC…DDDDDDDDDY (92 aa)) is repression of TATA-containing promoters. Residues 155 to 183 (AMVQRPPLADGSVASKPSEDDDDDDDDDY) form a disordered region. Residues 173–183 (EDDDDDDDDDY) are compositionally biased toward acidic residues.

The protein belongs to the NC2 beta/DR1 family. As to quaternary structure, component of the Ada2a-containing (ATAC) complex composed of at least Ada2a, Atac1, Hcf, Ada3, Gcn5, Mocs2B, Charac-14, Atac3, Atac2, NC2beta and wds. Homodimer. Interacts with NC2-alpha/Drap1 to form the dNC2 complex.

It localises to the nucleus. Bifunctional basic transcription factor. Activates transcription of DPE (Downstream Promoter Element) containing promoters while repressing transcription of promoters which contain TATA elements. Together with Chrac-14, promotes nucleosome sliding of ATP-dependent nucleosome remodeling complexes. The polypeptide is Protein Dr1 (NC2beta) (Drosophila melanogaster (Fruit fly)).